A 107-amino-acid chain; its full sequence is Class I hydrophobin 3 (107 aa).

The N-terminal stretch at 1 to 18 is a signal peptide; it reads MQFKVLAALVIGATLAAA. 4 cysteine pairs are disulfide-bonded: cysteine 26/cysteine 86, cysteine 33/cysteine 80, cysteine 34/cysteine 67, and cysteine 87/cysteine 100. N-linked (GlcNAc...) asparagine glycans are attached at residues asparagine 35 and asparagine 89.

The protein belongs to the fungal hydrophobin family. Self-assembles to form functional amyloid fibrils called rodlets. Self-assembly into fibrillar rodlets occurs spontaneously at hydrophobic:hydrophilic interfaces and the rodlets further associate laterally to form amphipathic monolayers.

It localises to the secreted. Its subcellular location is the cell wall. In terms of biological role, aerial growth, conidiation, and dispersal of filamentous fungi in the environment rely upon a capability of their secreting small amphipathic proteins called hydrophobins (HPBs) with low sequence identity. Class I can self-assemble into an outermost layer of rodlet bundles on aerial cell surfaces, conferring cellular hydrophobicity that supports fungal growth, development and dispersal; whereas Class II form highly ordered films at water-air interfaces through intermolecular interactions but contribute nothing to the rodlet structure. Pnh3 is a class I hydrophobin that might be involved in the attachment of the hydrophilic wall of hyphae to the hydrophobic surface of wood under inorganic phosphate (Pi)-deficient conditions and enable the mycelium to degrade efficiently the components of wood and to acquire nutrients containing Pi. In Pholiota nameko, this protein is Class I hydrophobin 3.